Consider the following 156-residue polypeptide: Arginine repressor (156 aa).

Belongs to the ArgR family.

Its subcellular location is the cytoplasm. The protein operates within amino-acid biosynthesis; L-arginine biosynthesis [regulation]. Regulates arginine biosynthesis genes. This Shewanella putrefaciens (strain CN-32 / ATCC BAA-453) protein is Arginine repressor.